Here is a 201-residue protein sequence, read N- to C-terminus: MADKDKKVKKKKAKEDAPAEEAPAAAAPAGDRQSSRGSRKAKRTGSNVFSMFSQKQVAEFKEAFQLMDHDKDGIIGKNDLRATFDSLGRLASEKELDEMVGEASGPINFTQLLTLFANRMSGGSDEDDVVINAFKTFDEEGKIDSERLRHALMTWGDKFSADEVDEAYDQMDIDDKGYIDTTKLIAMLTASAEEEEGGEAA.

Positions 1 to 48 (MADKDKKVKKKKAKEDAPAEEAPAAAAPAGDRQSSRGSRKAKRTGSNV) are disordered. Residues 20 to 29 (EEAPAAAAPA) show a composition bias toward low complexity. A Phosphoserine modification is found at Ser46. EF-hand domains follow at residues 55–90 (KQVAEFKEAFQLMDHDKDGIIGKNDLRATFDSLGRL), 125–158 (DEDDVVINAFKTFDEEGKIDSERLRHALMTWGDK), and 159–194 (FSADEVDEAYDQMDIDDKGYIDTTKLIAMLTASAEE). 4 residues coordinate Ca(2+): Asp68, Asp70, Asp72, and Asp79.

Myosin is a hexamer of 2 heavy chains and 4 light chains.

The protein is Myosin regulatory light chain 2 of Bombyx mori (Silk moth).